A 308-amino-acid polypeptide reads, in one-letter code: Aspartate carbamoyltransferase catalytic subunit (308 aa).

2 residues coordinate carbamoyl phosphate: arginine 59 and threonine 60. L-aspartate is bound at residue lysine 87. Positions 109, 139, and 142 each coordinate carbamoyl phosphate. L-aspartate is bound by residues arginine 172 and arginine 224. Carbamoyl phosphate-binding residues include alanine 265 and proline 266.

Belongs to the aspartate/ornithine carbamoyltransferase superfamily. ATCase family. In terms of assembly, heterododecamer (2C3:3R2) of six catalytic PyrB chains organized as two trimers (C3), and six regulatory PyrI chains organized as three dimers (R2).

The enzyme catalyses carbamoyl phosphate + L-aspartate = N-carbamoyl-L-aspartate + phosphate + H(+). It participates in pyrimidine metabolism; UMP biosynthesis via de novo pathway; (S)-dihydroorotate from bicarbonate: step 2/3. In terms of biological role, catalyzes the condensation of carbamoyl phosphate and aspartate to form carbamoyl aspartate and inorganic phosphate, the committed step in the de novo pyrimidine nucleotide biosynthesis pathway. This is Aspartate carbamoyltransferase catalytic subunit from Streptococcus thermophilus (strain ATCC BAA-491 / LMD-9).